The following is a 335-amino-acid chain: MKVEFAPLNIPLARRLQTAAVLHWLLSFLLFAQVCLGIIVFLIIYNYWFLYLPYLTWLYFDWQTPEQGGRRSEWVRNWAIWRYFKDYFPIHLIKTWDLDPSHNYIFGFHPHGVLVVGAFGNFCTNYSAFKELFPGFTSYLHVLPYWFRCPLFREYLMSSGPVSVSKKSVCHVLSKEGGGNISVIVLGGAEESLDAHPGKFTLFIRQRKGFVKIALTHGAYLVPVFSFGENELFKQVSNPEGSWLRNVQEKLQKIMGFALPLFHARGIFQYNFGLIPYRKPIHTVVGRPIPVRQTLNPTSEQIEELHQTYMEELRKLFEEHKGKYGIPENETLIFR.

A run of 2 helical transmembrane segments spans residues 24–44 and 104–124; these read WLLS…FLII and YIFG…NFCT. N-linked (GlcNAc...) asparagine glycans are attached at residues asparagine 125 and asparagine 180.

This sequence belongs to the diacylglycerol acyltransferase family.

The protein resides in the endoplasmic reticulum membrane. The catalysed reaction is a 2-acylglycerol + an acyl-CoA = a 1,2-diacylglycerol + CoA. It catalyses the reaction 2-(9Z-octadecenoyl)-glycerol + butanoyl-CoA = 1-butanoyl-2-(9Z-octadecenoyl)-glycerol + CoA. It carries out the reaction 2-(9Z-octadecenoyl)-glycerol + octanoyl-CoA = 1-octanoyl-2-(9Z-octadecenoyl)-glycerol + CoA. The enzyme catalyses 2-(9Z-octadecenoyl)-glycerol + dodecanoyl-CoA = 1-dodecanoyl-2-(9Z-octadecenoyl)-glycerol + CoA. The catalysed reaction is 2-(9Z-octadecenoyl)-glycerol + tetradecanoyl-CoA = 1-tetradecanoyl-2-(9Z-octadecenoyl)-glycerol + CoA. It catalyses the reaction 2-(9Z-octadecenoyl)-glycerol + hexadecanoyl-CoA = 1-hexadecanoyl-2-(9Z-octadecenoyl)-glycerol + CoA. It carries out the reaction 2-(9Z-octadecenoyl)-glycerol + octadecanoyl-CoA = 1-octadecanoyl-2-(9Z-octadecenoyl)-glycerol + CoA. The enzyme catalyses eicosanoyl-CoA + 2-(9Z-octadecenoyl)-glycerol = 1-eicosanoyl-2-(9Z-octadecenoyl)-glycerol + CoA. The catalysed reaction is 2-(9Z-octadecenoyl)-glycerol + (9Z)-octadecenoyl-CoA = 1,2-di-(9Z-octadecenoyl)-glycerol + CoA. It catalyses the reaction 2-(9Z-octadecenoyl)-glycerol + (9Z,12Z)-octadecadienoyl-CoA = 1-(9Z,12Z-octadecadienoyl)-2-(9Z-octadecenoyl)-glycerol + CoA. It carries out the reaction 2-(9Z-octadecenoyl)-glycerol + (5Z,8Z,11Z,14Z)-eicosatetraenoyl-CoA = 1-(5Z,8Z,11Z,14Z-eicosatetraenoyl)-2-(9Z-octadecenoyl)-glycerol + CoA. The enzyme catalyses a 2-acylglycerol + an acyl-CoA = a 1,2-diacyl-sn-glycerol + CoA. The catalysed reaction is a 2-acylglycerol + an acyl-CoA = a 2,3-diacyl-sn-glycerol + CoA. It catalyses the reaction a 1-acylglycerol + an acyl-CoA = a 1,2-diacylglycerol + CoA. It carries out the reaction 1-dodecanoylglycerol + (9Z)-octadecenoyl-CoA = 1-dodecanoyl-2-(9Z-octadecenoyl)-glycerol + CoA. The enzyme catalyses 1-tetradecanoylglycerol + (9Z)-octadecenoyl-CoA = 1-tetradecanoyl-2-(9Z-octadecenoyl)-glycerol + CoA. The catalysed reaction is 1-hexadecanoylglycerol + (9Z)-octadecenoyl-CoA = 1-hexadecanoyl-2-(9Z-octadecenoyl)-glycerol + CoA. It catalyses the reaction 1-(9Z-octadecenoyl)-glycerol + (9Z)-octadecenoyl-CoA = 1,2-di-(9Z-octadecenoyl)-glycerol + CoA. It carries out the reaction 1-(9Z,12Z-octadecadienoyl)-glycerol + (9Z)-octadecenoyl-CoA = 1-(9Z,12Z-octadecadienoyl)-2-(9Z-octadecenoyl)-glycerol + CoA. The enzyme catalyses 1-(9Z,12Z,15Z-octadecatrienoyl)-glycerol + (9Z)-octadecenoyl-CoA = 1-(9Z,12Z,15Z-octadecatrienoyl)-2-(9Z-octadecenoyl)-glycerol + CoA. The catalysed reaction is 1-(5Z,8Z,11Z,14Z-eicosatetraenoyl)-glycerol + (9Z)-octadecenoyl-CoA = 1-(5Z,8Z,11Z,14Z-eicosatetraenoyl)-2-(9Z-octadecenoyl)-glycerol + CoA. It catalyses the reaction a 1-acylglycerol + an acyl-CoA = a 1,3-diacylglycerol + CoA. It carries out the reaction 1-dodecanoylglycerol + (9Z)-octadecenoyl-CoA = 1-dodecanoyl-3-(9Z-octadecenoyl)-glycerol + CoA. The enzyme catalyses 1-hexadecanoylglycerol + (9Z)-octadecenoyl-CoA = 1-(9Z-octadecenoyl)-3-hexadecanoylglycerol + CoA. The catalysed reaction is 1-octadecanoylglycerol + (9Z)-octadecenoyl-CoA = 1-octadecanoyl-3-(9Z-octadecenoyl)-glycerol + CoA. It catalyses the reaction 1-(9Z-octadecenoyl)-sn-glycerol + (9Z)-octadecenoyl-CoA = 1,3-di-(9Z-octadecenoyl)-glycerol + CoA. It carries out the reaction 1-(9Z,12Z-octadecadienoyl)-glycerol + (9Z)-octadecenoyl-CoA = 1-(9Z-octadecenoyl)-3-(9Z,12Z-octadecadienoyl)-glycerol + CoA. The enzyme catalyses 1-(9Z,12Z,15Z-octadecatrienoyl)-glycerol + (9Z)-octadecenoyl-CoA = 1-(9Z,12Z,15Z-octadecatrienoyl)-3-(9Z-octadecenoyl)-glycerol + CoA. The catalysed reaction is a 1-acyl-sn-glycerol + an acyl-CoA = a 1,3-diacyl-sn-glycerol + CoA. It catalyses the reaction a 3-acyl-sn-glycerol + an acyl-CoA = a 1,3-diacyl-sn-glycerol + CoA. It carries out the reaction 3-octadecanoyl-sn-glycerol + (9Z)-octadecenoyl-CoA = 1-(9Z-octadecenoyl)-3-octadecanoyl-sn-glycerol + CoA. It participates in glycerolipid metabolism; triacylglycerol biosynthesis. Involved in glycerolipid synthesis and lipid metabolism. Catalyzes the formation of diacylglycerol, the precursor of triacylglycerol, by transferring the acyl chain of a fatty acyl-CoA to a monoacylglycerol, mainly at the sn-1 or sn-3 positions. It uses both sn-2-monoacylglycerol (2-acylglycerol) and sn-1-monoacylglycerol (1-acyl-sn-glycerol) equally well as substrates, and uses sn-3-monoacylglycerol (3-acyl-sn-glycerol) with lower efficiency. Probably not involved in absorption of dietary fat in the small intestine. The polypeptide is 2-acylglycerol O-acyltransferase 1 (MOGAT1) (Bos taurus (Bovine)).